The chain runs to 435 residues: ATP-dependent protease ATPase subunit HslU (435 aa).

Residues valine 18, 60–65 (GCGKTE), aspartate 248, glutamate 313, and arginine 385 contribute to the ATP site.

Belongs to the ClpX chaperone family. HslU subfamily. In terms of assembly, a double ring-shaped homohexamer of HslV is capped on each side by a ring-shaped HslU homohexamer. The assembly of the HslU/HslV complex is dependent on binding of ATP.

It is found in the cytoplasm. Functionally, ATPase subunit of a proteasome-like degradation complex; this subunit has chaperone activity. The binding of ATP and its subsequent hydrolysis by HslU are essential for unfolding of protein substrates subsequently hydrolyzed by HslV. HslU recognizes the N-terminal part of its protein substrates and unfolds these before they are guided to HslV for hydrolysis. This Beijerinckia indica subsp. indica (strain ATCC 9039 / DSM 1715 / NCIMB 8712) protein is ATP-dependent protease ATPase subunit HslU.